The sequence spans 187 residues: Frataxin, mitochondrial (187 aa).

It belongs to the frataxin family. In terms of assembly, monomer. Oligomer. Interacts with NIFS1.

Its subcellular location is the mitochondrion. The enzyme catalyses 4 Fe(2+) + O2 + 4 H(+) = 4 Fe(3+) + 2 H2O. In terms of biological role, promotes the biosynthesis of heme as well as the assembly and repair of iron-sulfur clusters by delivering Fe(2+) to proteins involved in these pathways. May play a role in the protection against iron-catalyzed oxidative stress through its ability to catalyze the oxidation of Fe(2+) to Fe(3+). May be able to store large amounts of the metal in the form of a ferrihydrite mineral by oligomerization. Binds to the mitochondrial cysteine desulfurase NIFS1 and increases its activity. The sequence is that of Frataxin, mitochondrial (FH) from Arabidopsis thaliana (Mouse-ear cress).